We begin with the raw amino-acid sequence, 330 residues long: NADH-quinone oxidoreductase subunit H (330 aa).

The next 9 helical transmembrane spans lie at 5 to 25 (LFFIIETFIKAVVILAVIACL), 44 to 64 (IGPDMVGPVGVLQIVADMIKL), 78 to 98 (FIFLIAPLISAIAAFAALAPI), 122 to 142 (VLYVMGVASVCVFSPLMAGLA), 156 to 176 (VMGLISFEVVSGLALLSVIMI), 192 to 212 (IFGWFVFKQPLAFVLFLMASF), 240 to 260 (MRWAMFFIGEYANMIASSIVI), 271 to 293 (FWFVPGGLMMIFKASCVFFFFLW), and 310 to 330 (CWKILLPLALVNVLITGIALI).

The protein belongs to the complex I subunit 1 family. In terms of assembly, NDH-1 is composed of 14 different subunits. Subunits NuoA, H, J, K, L, M, N constitute the membrane sector of the complex.

The protein resides in the cell inner membrane. The enzyme catalyses a quinone + NADH + 5 H(+)(in) = a quinol + NAD(+) + 4 H(+)(out). Functionally, NDH-1 shuttles electrons from NADH, via FMN and iron-sulfur (Fe-S) centers, to quinones in the respiratory chain. The immediate electron acceptor for the enzyme in this species is believed to be ubiquinone. Couples the redox reaction to proton translocation (for every two electrons transferred, four hydrogen ions are translocated across the cytoplasmic membrane), and thus conserves the redox energy in a proton gradient. This subunit may bind ubiquinone. The chain is NADH-quinone oxidoreductase subunit H from Campylobacter curvus (strain 525.92).